The following is a 492-amino-acid chain: Spindle assembly abnormal protein 6 (492 aa).

The PISA domain occupies 46 to 98 (SGEKELKFEISRSDDFEFLFSETLNNEKYQILARDHDLTVDFDAFPKVIIQHL). Residues 192 to 407 (KSADELASLR…KIAHYRAQRF (216 aa)) are a coiled coil.

As to quaternary structure, nine homodimers form a cartwheel structure with an internal diameter of 23 nM and radial spokes connecting to the microtubule triplets. Interacts with sas-5.

It localises to the cytoplasm. It is found in the cytoskeleton. Its subcellular location is the microtubule organizing center. The protein localises to the centrosome. The protein resides in the centriole. Its function is as follows. Central scaffolding component of the centrioles ensuring their 9-fold symmetry. Required for centrosome biogenesis and duplication. In Caenorhabditis elegans, this protein is Spindle assembly abnormal protein 6.